Consider the following 105-residue polypeptide: Urease subunit beta (105 aa).

This sequence belongs to the urease beta subunit family. As to quaternary structure, heterotrimer of UreA (gamma), UreB (beta) and UreC (alpha) subunits. Three heterotrimers associate to form the active enzyme.

The protein localises to the cytoplasm. It carries out the reaction urea + 2 H2O + H(+) = hydrogencarbonate + 2 NH4(+). It functions in the pathway nitrogen metabolism; urea degradation; CO(2) and NH(3) from urea (urease route): step 1/1. The polypeptide is Urease subunit beta (Pseudomonas putida (strain ATCC 47054 / DSM 6125 / CFBP 8728 / NCIMB 11950 / KT2440)).